The sequence spans 381 residues: Succinate--CoA ligase [ADP-forming] subunit beta (381 aa).

Residues 9 to 236 (KELLRVAGVP…ESSEAPSEVD (228 aa)) enclose the ATP-grasp domain. Residues K45, 52–54 (GRG), A94, and E99 each bind ATP. The Mg(2+) site is built by N191 and D205. Substrate contacts are provided by residues N256 and 313-315 (GIT).

It belongs to the succinate/malate CoA ligase beta subunit family. Heterotetramer of two alpha and two beta subunits. Mg(2+) is required as a cofactor.

The catalysed reaction is succinate + ATP + CoA = succinyl-CoA + ADP + phosphate. It carries out the reaction GTP + succinate + CoA = succinyl-CoA + GDP + phosphate. The protein operates within carbohydrate metabolism; tricarboxylic acid cycle; succinate from succinyl-CoA (ligase route): step 1/1. Succinyl-CoA synthetase functions in the citric acid cycle (TCA), coupling the hydrolysis of succinyl-CoA to the synthesis of either ATP or GTP and thus represents the only step of substrate-level phosphorylation in the TCA. The beta subunit provides nucleotide specificity of the enzyme and binds the substrate succinate, while the binding sites for coenzyme A and phosphate are found in the alpha subunit. The chain is Succinate--CoA ligase [ADP-forming] subunit beta from Gemmatimonas aurantiaca (strain DSM 14586 / JCM 11422 / NBRC 100505 / T-27).